Reading from the N-terminus, the 599-residue chain is DNA mismatch repair protein MutL (599 aa).

This sequence belongs to the DNA mismatch repair MutL/HexB family.

In terms of biological role, this protein is involved in the repair of mismatches in DNA. It is required for dam-dependent methyl-directed DNA mismatch repair. May act as a 'molecular matchmaker', a protein that promotes the formation of a stable complex between two or more DNA-binding proteins in an ATP-dependent manner without itself being part of a final effector complex. This chain is DNA mismatch repair protein MutL, found in Rhodopseudomonas palustris (strain BisB18).